The sequence spans 333 residues: DNA primase small subunit PriS (333 aa).

Active-site residues include D96, D98, and D237.

It belongs to the eukaryotic-type primase small subunit family. As to quaternary structure, heterodimer of a small subunit (PriS) and a large subunit (PriL). It depends on Mg(2+) as a cofactor. Requires Mn(2+) as cofactor.

Functionally, catalytic subunit of DNA primase, an RNA polymerase that catalyzes the synthesis of short RNA molecules used as primers for DNA polymerase during DNA replication. The small subunit contains the primase catalytic core and has DNA synthesis activity on its own. Binding to the large subunit stabilizes and modulates the activity, increasing the rate of DNA synthesis while decreasing the length of the DNA fragments, and conferring RNA synthesis capability. The DNA polymerase activity may enable DNA primase to also catalyze primer extension after primer synthesis. May also play a role in DNA repair. The protein is DNA primase small subunit PriS of Thermoplasma volcanium (strain ATCC 51530 / DSM 4299 / JCM 9571 / NBRC 15438 / GSS1).